Reading from the N-terminus, the 1103-residue chain is Detocs histidine-protein kinase DtcA (1103 aa).

At H758 the chain carries Phosphohistidine; by autocatalysis. One copy of the TPR repeat lies at T818–E851.

Autophosphorylated.

The enzyme catalyses ATP + protein L-histidine = ADP + protein N-phospho-L-histidine.. Its function is as follows. Sensor-kinase member of the two-component regulatory system Detocs that confers resistance to bacteriophage. When the system (DtcA-DtcB-DtcC) is expressed in a susceptible E.coli (strain MG1655) it confers resistance to bacteriophages T2, T4, T5, T7, SECphi4, SECphi6 and SECphi27; the level of resistance varies, resistance to T2, T7 and SECphi4 is not very high. DtcA (this subunit) probably autophosphorylates upon sensing viral infection, and subsequently transfers the phosphate signal to DtcC which activates it, leading to an antiviral defense; DtcB may scavenge phosphorylation signals from accidental activation of DtcA. The sequence is that of Detocs histidine-protein kinase DtcA from Enterobacter cloacae (strain JD6301).